The sequence spans 252 residues: Imidazole glycerol phosphate synthase subunit HisF (252 aa).

Catalysis depends on residues aspartate 11 and aspartate 130.

It belongs to the HisA/HisF family. As to quaternary structure, heterodimer of HisH and HisF.

It is found in the cytoplasm. It carries out the reaction 5-[(5-phospho-1-deoxy-D-ribulos-1-ylimino)methylamino]-1-(5-phospho-beta-D-ribosyl)imidazole-4-carboxamide + L-glutamine = D-erythro-1-(imidazol-4-yl)glycerol 3-phosphate + 5-amino-1-(5-phospho-beta-D-ribosyl)imidazole-4-carboxamide + L-glutamate + H(+). The protein operates within amino-acid biosynthesis; L-histidine biosynthesis; L-histidine from 5-phospho-alpha-D-ribose 1-diphosphate: step 5/9. Its function is as follows. IGPS catalyzes the conversion of PRFAR and glutamine to IGP, AICAR and glutamate. The HisF subunit catalyzes the cyclization activity that produces IGP and AICAR from PRFAR using the ammonia provided by the HisH subunit. In Alkaliphilus metalliredigens (strain QYMF), this protein is Imidazole glycerol phosphate synthase subunit HisF.